Consider the following 310-residue polypeptide: Tagatose-6-phosphate kinase (310 aa).

It belongs to the carbohydrate kinase PfkB family. LacC subfamily.

It carries out the reaction D-tagatofuranose 6-phosphate + ATP = D-tagatofuranose 1,6-bisphosphate + ADP + H(+). The protein operates within carbohydrate metabolism; D-tagatose 6-phosphate degradation; D-glyceraldehyde 3-phosphate and glycerone phosphate from D-tagatose 6-phosphate: step 1/2. This chain is Tagatose-6-phosphate kinase, found in Staphylococcus aureus (strain bovine RF122 / ET3-1).